The primary structure comprises 278 residues: MRSVEYLAYLRSKYGIRPRRRLGQHFMVDDNILEFMVEAAEVREDDIVLEIGPGPGLLTRYLMTRAGQVIAVELDGRMVEILKRELGEAPNLEIVRADFLEYDVPDDVNKVVANIPYNISSPITFKLLELDIDVAVLTYQREFAERMVAEPGSKKYSRLTVMVNLLADVELLRGVPRRAFIPPPRVGSSVVRLTPKSEEERPDVDPDTLESVCRALFQHKNKTVRNALLLSAHEWATDREQAREVLEELPEDLLSERPLHLPPERVAELAAAIESALG.

S-adenosyl-L-methionine-binding residues include His-25, Met-27, Gly-52, Glu-73, Asp-98, and Asn-114.

Belongs to the class I-like SAM-binding methyltransferase superfamily. rRNA adenine N(6)-methyltransferase family. RsmA subfamily.

The protein resides in the cytoplasm. In terms of biological role, specifically dimethylates two adjacent adenosines in the loop of a conserved hairpin near the 3'-end of 16S rRNA in the 30S particle. May play a critical role in biogenesis of 30S subunits. In Methanopyrus kandleri (strain AV19 / DSM 6324 / JCM 9639 / NBRC 100938), this protein is Probable ribosomal RNA small subunit methyltransferase A.